A 190-amino-acid chain; its full sequence is Putative transcription factor ovo-like protein 3 (190 aa).

Disordered regions lie at residues 1-21 and 35-65; these read MPRA…GHLP and SLGG…SAPR. Residues 41–62 are compositionally biased toward polar residues; that stretch reads AQQSSSVRDPWTAQPTQGNLTS. 4 consecutive C2H2-type zinc fingers follow at residues 70-92, 98-120, 126-149, and 165-187; these read LGCP…LKCH, HLCR…MRTH, FRCS…AKVH, and HVCE…RALH.

Belongs to the krueppel C2H2-type zinc-finger protein family.

It is found in the nucleus. May act as a transcription regulator. This Homo sapiens (Human) protein is Putative transcription factor ovo-like protein 3 (OVOL3).